The primary structure comprises 116 residues: Fluoride-specific ion channel FluC 1 (116 aa).

4 helical membrane passes run 1–21 (MGKLFLIGAGGFIGACLRYTV), 31–51 (IPAGTLTVNLLGTIVLAFLTF), 58–78 (MVYLVNIGILGSFTTFSTFAY), and 92–112 (FFLNIFLNVALCLVGVSIAYL). 2 residues coordinate Na(+): Gly-68 and Thr-71.

The protein belongs to the fluoride channel Fluc/FEX (TC 1.A.43) family.

It is found in the cell membrane. It carries out the reaction fluoride(in) = fluoride(out). With respect to regulation, na(+) is not transported, but it plays an essential structural role and its presence is essential for fluoride channel function. Functionally, fluoride-specific ion channel. Important for reducing fluoride concentration in the cell, thus reducing its toxicity. The polypeptide is Fluoride-specific ion channel FluC 1 (Methanosarcina barkeri (strain Fusaro / DSM 804)).